Reading from the N-terminus, the 538-residue chain is Calcyphosin-2 (538 aa).

Over residues Arg-134–Lys-146 the composition is skewed to polar residues. Residues Arg-134–Asp-154 are disordered. 3 EF-hand domains span residues Arg-426 to Glu-461, Val-462 to Glu-497, and Tyr-498 to Ser-533. Positions 439, 443, 450, 477, 479, 481, 486, 511, 513, 515, 517, and 522 each coordinate Ca(2+).

As to expression, abundantly expressed in many tissues. Expressed in brain, colon, heart, kidney, liver, lung, liver, pancreas, placenta, skeletal muscle, testis and thymus. Highest expression in colon, testis, lung, placenta and brain.

This Homo sapiens (Human) protein is Calcyphosin-2.